The chain runs to 216 residues: Ras-related protein Rab11A (216 aa).

GTP contacts are provided by residues 19-27, 38-44, 67-71, 125-128, and 155-157; these read GDSGVGKSN, CLESKST, DTAGQ, NKSD, and SAL. An Effector region motif is present at residues 41–49; it reads SKSTIGVEF. 2 S-geranylgeranyl cysteine lipidation sites follow: Cys-213 and Cys-214.

It belongs to the small GTPase superfamily. Rab family.

The protein localises to the cell membrane. This chain is Ras-related protein Rab11A (RAB11A), found in Nicotiana tabacum (Common tobacco).